The following is a 238-amino-acid chain: Small ribosomal subunit protein uS2 (238 aa).

This sequence belongs to the universal ribosomal protein uS2 family.

This chain is Small ribosomal subunit protein uS2, found in Actinobacillus pleuropneumoniae serotype 7 (strain AP76).